The primary structure comprises 370 residues: MIAVLKTPLSNHIKANTKALFSSLPKTKNELEISLDDLAKQIISGYRLSREEAIILTQIAGEEDILLLCEAADRVRQACCGNVVDLCSIINVKSGGCSENCSFCSQSVHHPGEDSPIYGLKSTEEILDQAKAAEAAGAKRFCLVSQGRGVKYNSPKSTEFEQILGTVRQILAETNIKPCCALGELTPEQAQALAEAGVTRYNHNLEASEHFYPEIVSTHSWNDRVETVKNLKAAGIQACTGGIIGMGETWADRIDLALALRELEVESVPLNLLNSREGTPLGGLLKLDPYDALKAIAIFRLILPKQIIRYAGGREAVMGDLQALGLKAGINAMLIGHYLTTLGQPPEKDQAMLKSLGLQGGETPIATNGL.

Residues 79–314 (CCGNVVDLCS…KQIIRYAGGR (236 aa)) form the Radical SAM core domain. [4Fe-4S] cluster contacts are provided by cysteine 97, cysteine 101, and cysteine 104. Positions 142, 179, 239, and 309 each coordinate [2Fe-2S] cluster.

This sequence belongs to the radical SAM superfamily. Biotin synthase family. Homodimer. The cofactor is [4Fe-4S] cluster. [2Fe-2S] cluster serves as cofactor.

The enzyme catalyses (4R,5S)-dethiobiotin + (sulfur carrier)-SH + 2 reduced [2Fe-2S]-[ferredoxin] + 2 S-adenosyl-L-methionine = (sulfur carrier)-H + biotin + 2 5'-deoxyadenosine + 2 L-methionine + 2 oxidized [2Fe-2S]-[ferredoxin]. The protein operates within cofactor biosynthesis; biotin biosynthesis; biotin from 7,8-diaminononanoate: step 2/2. In terms of biological role, catalyzes the conversion of dethiobiotin (DTB) to biotin by the insertion of a sulfur atom into dethiobiotin via a radical-based mechanism. The protein is Biotin synthase of Trichodesmium erythraeum (strain IMS101).